We begin with the raw amino-acid sequence, 119 residues long: Small ribosomal subunit protein uS13 (119 aa).

A disordered region spans residues 93-119; that stretch reads RRGLPLRGQRTRSNARTRKGKRKPIRS.

This sequence belongs to the universal ribosomal protein uS13 family. As to quaternary structure, part of the 30S ribosomal subunit. Forms a loose heterodimer with protein S19. Forms two bridges to the 50S subunit in the 70S ribosome.

Functionally, located at the top of the head of the 30S subunit, it contacts several helices of the 16S rRNA. In the 70S ribosome it contacts the 23S rRNA (bridge B1a) and protein L5 of the 50S subunit (bridge B1b), connecting the 2 subunits; these bridges are implicated in subunit movement. Contacts the tRNAs in the A and P-sites. This chain is Small ribosomal subunit protein uS13, found in Coxiella burnetii (strain RSA 493 / Nine Mile phase I).